A 111-amino-acid chain; its full sequence is BET1-like protein (111 aa).

Topologically, residues 1–86 (MADWARAQSP…MARSGRDNRK (86 aa)) are cytoplasmic. Phosphoserine occurs at positions 9 and 37. The t-SNARE coiled-coil homology domain maps to 15–77 (EILDRENKRM…TGSVKRFSTM (63 aa)). The chain crosses the membrane as a helical; Anchor for type IV membrane protein span at residues 87 to 107 (LLCGMAVGLIVAFFILSYFLS). The Lumenal segment spans residues 108–111 (RART).

As to quaternary structure, component of a SNARE complex consisting of STX5, YKT6, GOSR1 and BET1L. Interacts with STX5.

The protein localises to the golgi apparatus membrane. Its subcellular location is the golgi apparatus. It is found in the trans-Golgi network membrane. Its function is as follows. Vesicle SNARE required for targeting and fusion of retrograde transport vesicles with the Golgi complex. Required for the integrity of the Golgi complex. In Pongo abelii (Sumatran orangutan), this protein is BET1-like protein.